The primary structure comprises 505 residues: Apolipoprotein N-acyltransferase (505 aa).

Transmembrane regions (helical) follow at residues 26–46 (FAPY…LILL), 66–86 (FATG…MPLI), 89–109 (LFLM…FAWL), 129–149 (LWLI…WLWL), 161–181 (FAPI…AGAL), and 186–206 (IHKQ…GFGI). The 247-residue stretch at 225–471 (IQGNVDQNLK…TAVLRAELTP (247 aa)) folds into the CN hydrolase domain. E264 acts as the Proton acceptor in catalysis. K330 is an active-site residue. C382 serves as the catalytic Nucleophile. Residues 481–501 (FGTWPLYFWVALSLMLAWWLP) form a helical membrane-spanning segment.

The protein belongs to the CN hydrolase family. Apolipoprotein N-acyltransferase subfamily.

It localises to the cell inner membrane. It carries out the reaction N-terminal S-1,2-diacyl-sn-glyceryl-L-cysteinyl-[lipoprotein] + a glycerophospholipid = N-acyl-S-1,2-diacyl-sn-glyceryl-L-cysteinyl-[lipoprotein] + a 2-acyl-sn-glycero-3-phospholipid + H(+). The protein operates within protein modification; lipoprotein biosynthesis (N-acyl transfer). Its function is as follows. Catalyzes the phospholipid dependent N-acylation of the N-terminal cysteine of apolipoprotein, the last step in lipoprotein maturation. This chain is Apolipoprotein N-acyltransferase, found in Vibrio parahaemolyticus serotype O3:K6 (strain RIMD 2210633).